The following is a 426-amino-acid chain: D-tagatose-1,6-bisphosphate aldolase subunit KbaZ (426 aa).

This sequence belongs to the GatZ/KbaZ family. KbaZ subfamily. As to quaternary structure, forms a complex with KbaY.

It participates in carbohydrate metabolism; D-tagatose 6-phosphate degradation; D-glyceraldehyde 3-phosphate and glycerone phosphate from D-tagatose 6-phosphate: step 2/2. Functionally, component of the tagatose-1,6-bisphosphate aldolase KbaYZ that is required for full activity and stability of the Y subunit. Could have a chaperone-like function for the proper and stable folding of KbaY. When expressed alone, KbaZ does not show any aldolase activity. The polypeptide is D-tagatose-1,6-bisphosphate aldolase subunit KbaZ (Escherichia coli O127:H6 (strain E2348/69 / EPEC)).